Reading from the N-terminus, the 153-residue chain is Protein-export protein SecB (153 aa).

Belongs to the SecB family. Homotetramer, a dimer of dimers. One homotetramer interacts with 1 SecA dimer.

The protein localises to the cytoplasm. One of the proteins required for the normal export of preproteins out of the cell cytoplasm. It is a molecular chaperone that binds to a subset of precursor proteins, maintaining them in a translocation-competent state. It also specifically binds to its receptor SecA. The sequence is that of Protein-export protein SecB from Edwardsiella ictaluri (strain 93-146).